A 362-amino-acid polypeptide reads, in one-letter code: Glutamate 5-kinase (362 aa).

Lys-3 provides a ligand contact to ATP. Substrate-binding residues include Ser-43, Asp-128, and Asn-140. ATP contacts are provided by residues 160 to 161 (TD) and 202 to 208 (TGGMRTK). Positions 267 to 348 (AGAILIDDGA…REIENVLGYS (82 aa)) constitute a PUA domain.

It belongs to the glutamate 5-kinase family.

It localises to the cytoplasm. The catalysed reaction is L-glutamate + ATP = L-glutamyl 5-phosphate + ADP. It functions in the pathway amino-acid biosynthesis; L-proline biosynthesis; L-glutamate 5-semialdehyde from L-glutamate: step 1/2. Functionally, catalyzes the transfer of a phosphate group to glutamate to form L-glutamate 5-phosphate. This Xanthomonas euvesicatoria pv. vesicatoria (strain 85-10) (Xanthomonas campestris pv. vesicatoria) protein is Glutamate 5-kinase.